Reading from the N-terminus, the 368-residue chain is Transcription factor TGA7 (368 aa).

The span at 70-82 shows a compositional bias: polar residues; it reads HNQIEAEQPSSND. A disordered region spans residues 70–89; sequence HNQIEAEQPSSNDNQDDDGR. A bZIP domain is found at 91–151; that stretch reads HDKMKRRLAQ…LGPSGSINTG (61 aa). Coiled-coil stretches lie at residues 92–142 and 252–285; these read DKMK…QGHL and DQQI…SLAE. The tract at residues 93-113 is basic motif; it reads KMKRRLAQNREAARKSRLRKK. The leucine-zipper stretch occupies residues 119 to 133; it reads LEESRLKLSQLEQEL. Residues 152 to 363 form the DOG1 domain; that stretch reads IASFEMEYSH…RALSSLWAAR (212 aa).

The protein belongs to the bZIP family. Binds DNA as a dimer. Interacts with NPR1 and NPR4. Interacts with GRXC7/ROXY1.

It is found in the nucleus. Functionally, transcriptional activator that binds specifically to the DNA sequence 5'-TGACG-3'. Recognizes ocs elements like the as-1 motif of the cauliflower mosaic virus 35S promoter. Binding to the as-1-like cis elements mediate auxin- and salicylic acid-inducible transcription. May be involved in the induction of the systemic acquired resistance (SAR) via its interaction with NPR1. The protein is Transcription factor TGA7 (TGA7) of Arabidopsis thaliana (Mouse-ear cress).